Reading from the N-terminus, the 117-residue chain is Large ribosomal subunit protein uL18 (117 aa).

This sequence belongs to the universal ribosomal protein uL18 family. As to quaternary structure, part of the 50S ribosomal subunit; part of the 5S rRNA/L5/L18/L25 subcomplex. Contacts the 5S and 23S rRNAs.

Its function is as follows. This is one of the proteins that bind and probably mediate the attachment of the 5S RNA into the large ribosomal subunit, where it forms part of the central protuberance. The sequence is that of Large ribosomal subunit protein uL18 from Halorhodospira halophila (strain DSM 244 / SL1) (Ectothiorhodospira halophila (strain DSM 244 / SL1)).